A 435-amino-acid chain; its full sequence is Legumain (435 aa).

Residues 1–17 (MTWRVAVLLSLVLGAGA) form the signal peptide. Asn93 is a glycosylation site (N-linked (GlcNAc...) asparagine). His150 is an active-site residue. N-linked (GlcNAc...) asparagine glycosylation occurs at Asn169. Cys191 functions as the Nucleophile in the catalytic mechanism. Residues Asn215, Asn265, and Asn274 are each glycosylated (N-linked (GlcNAc...) asparagine). A propeptide spanning residues 326-435 (NMKESQVLVG…AMDKVCLSHY (110 aa)) is cleaved from the precursor. 2 disulfides stabilise this stretch: Cys380–Cys414 and Cys392–Cys431.

It belongs to the peptidase C13 family. Homodimer before autocatalytic removal of the propeptide. Monomer after autocatalytic processing. May interact with integrins. Post-translationally, activated by autocatalytic processing at pH 4. As to expression, detected in kidney cortex (at protein level).

Its subcellular location is the lysosome. It catalyses the reaction Hydrolysis of proteins and small molecule substrates at -Asn-|-Xaa- bonds.. In terms of biological role, has a strict specificity for hydrolysis of asparaginyl bonds. Can also cleave aspartyl bonds slowly, especially under acidic conditions. Involved in the processing of proteins for MHC class II antigen presentation in the lysosomal/endosomal system. Also involved in MHC class I antigen presentation in cross-presenting dendritic cells by mediating cleavage and maturation of Perforin-2 (MPEG1), thereby promoting antigen translocation in the cytosol. Required for normal lysosomal protein degradation in renal proximal tubules. Required for normal degradation of internalized EGFR. Plays a role in the regulation of cell proliferation via its role in EGFR degradation. The protein is Legumain (Lgmn) of Rattus norvegicus (Rat).